Consider the following 369-residue polypeptide: Anhydro-N-acetylmuramic acid kinase (369 aa).

12–19 (GTSMDGID) lines the ATP pocket.

Belongs to the anhydro-N-acetylmuramic acid kinase family.

The catalysed reaction is 1,6-anhydro-N-acetyl-beta-muramate + ATP + H2O = N-acetyl-D-muramate 6-phosphate + ADP + H(+). It participates in amino-sugar metabolism; 1,6-anhydro-N-acetylmuramate degradation. The protein operates within cell wall biogenesis; peptidoglycan recycling. In terms of biological role, catalyzes the specific phosphorylation of 1,6-anhydro-N-acetylmuramic acid (anhMurNAc) with the simultaneous cleavage of the 1,6-anhydro ring, generating MurNAc-6-P. Is required for the utilization of anhMurNAc either imported from the medium or derived from its own cell wall murein, and thus plays a role in cell wall recycling. In Shewanella sediminis (strain HAW-EB3), this protein is Anhydro-N-acetylmuramic acid kinase.